The sequence spans 134 residues: UPF0756 membrane protein YeaL (134 aa).

The next 4 helical transmembrane spans lie at 14-34 (ALGF…LIIV), 51-71 (LTVG…SGTL), 86-106 (LVAI…ITLM), and 110-130 (PQLV…FRGV).

Belongs to the UPF0756 family.

It localises to the cell membrane. The sequence is that of UPF0756 membrane protein YeaL from Salmonella typhimurium (strain LT2 / SGSC1412 / ATCC 700720).